The chain runs to 430 residues: Enolase (430 aa).

Glutamine 165 is a (2R)-2-phosphoglycerate binding site. Glutamate 207 functions as the Proton donor in the catalytic mechanism. Aspartate 244, glutamate 287, and aspartate 314 together coordinate Mg(2+). (2R)-2-phosphoglycerate contacts are provided by lysine 339, arginine 368, serine 369, and lysine 390. The active-site Proton acceptor is lysine 339.

The protein belongs to the enolase family. As to quaternary structure, component of the RNA degradosome, a multiprotein complex involved in RNA processing and mRNA degradation. It depends on Mg(2+) as a cofactor.

The protein resides in the cytoplasm. The protein localises to the secreted. It localises to the cell surface. It carries out the reaction (2R)-2-phosphoglycerate = phosphoenolpyruvate + H2O. It participates in carbohydrate degradation; glycolysis; pyruvate from D-glyceraldehyde 3-phosphate: step 4/5. Catalyzes the reversible conversion of 2-phosphoglycerate (2-PG) into phosphoenolpyruvate (PEP). It is essential for the degradation of carbohydrates via glycolysis. This chain is Enolase, found in Xanthomonas campestris pv. campestris (strain 8004).